Reading from the N-terminus, the 940-residue chain is Protein translocase subunit SecA (940 aa).

Residues Gln-85, 103-107, and Asp-505 contribute to the ATP site; that span reads GEGKT. Positions 851–940 are disordered; the sequence is PVQDGAERPS…KGGGGRRRKK (90 aa). Residues 855-865 show a composition bias toward basic and acidic residues; it reads GAERPSLEKEG. The span at 928-940 shows a compositional bias: basic residues; that stretch reads RRRKGGGGRRRKK.

The protein belongs to the SecA family. In terms of assembly, monomer and homodimer. Part of the essential Sec protein translocation apparatus which comprises SecA, SecYEG and auxiliary proteins SecDF. Other proteins may also be involved.

It is found in the cell membrane. The protein resides in the cytoplasm. The enzyme catalyses ATP + H2O + cellular proteinSide 1 = ADP + phosphate + cellular proteinSide 2.. Functionally, part of the Sec protein translocase complex. Interacts with the SecYEG preprotein conducting channel. Has a central role in coupling the hydrolysis of ATP to the transfer of proteins into and across the cell membrane, serving as an ATP-driven molecular motor driving the stepwise translocation of polypeptide chains across the membrane. The chain is Protein translocase subunit SecA from Streptomyces griseus.